The chain runs to 706 residues: MAKNSLKPSNPYNSEPETPQPRPKLPMIYYVVVIALLIGLQLAFFWSGSSREIPYSTFRTFITENKVESVRIAPEKIYVTLKPGVDSGLPKQEEGNDTTRKLLPGAKTPENEVTVNPVRDESLTALLETHGVRYEGSPGTTWISELIQWVLPFALLFGLYFFIFRRMGAGGPGAQFMNIGKNKAALYENLDEHTRITFKDVAGLDEAKAEVMEVVDFLKDPKKYTRLGGKLPKGVLLVGPPGTGKTLLAKAVAGEADVPFFSISGSDFVEMFVGVGAARVRDLFRQAKEKAPCIIFIDEIDAVGRSRGKGAMMGGNDERENTLNQLLVEMDGFATDKGVILMAATNRPDVLDPALLRPGRFDRQIMVDKPDLKGRMDTFRVHTKNMSLSPDVNLKALASQTPGFAGAEIANAANEAALLASRRNKESIEMKDFEDAIERVVAGLEKKNKVINPKEKRIVAYHEAGHAIVSWMMPENDPVQKISIVPRGMSALGYTMNIPLEDRYLMTKRELFARICGLLGGRIAEESVFGEISTGAQNDLEKITGIAYNMVMVYGMSDKIGNLSYYESNNPYYGAPGVEKKFGGETARLIDEEVKAIVESAADTVRTMLKEHRSKLEALARELLTKEMLQYCQIEEILGKRPGGQEEDSGEVDCSKKSAENGMVAHEPETTADAESTEKVGLSATELAELEAAAERLRQSRNVSDN.

The span at 1–17 (MAKNSLKPSNPYNSEPE) shows a compositional bias: polar residues. The segment at 1–20 (MAKNSLKPSNPYNSEPETPQ) is disordered. The Cytoplasmic portion of the chain corresponds to 1 to 24 (MAKNSLKPSNPYNSEPETPQPRPK). A helical membrane pass occupies residues 25 to 45 (LPMIYYVVVIALLIGLQLAFF). The Periplasmic portion of the chain corresponds to 46-142 (WSGSSREIPY…RYEGSPGTTW (97 aa)). A disordered region spans residues 88–111 (GLPKQEEGNDTTRKLLPGAKTPEN). A compositionally biased stretch (basic and acidic residues) spans 91–100 (KQEEGNDTTR). The chain crosses the membrane as a helical span at residues 143-163 (ISELIQWVLPFALLFGLYFFI). Residues 164 to 706 (FRRMGAGGPG…LRQSRNVSDN (543 aa)) are Cytoplasmic-facing. 239 to 246 (GPPGTGKT) lines the ATP pocket. Histidine 462 serves as a coordination point for Zn(2+). Residue glutamate 463 is part of the active site. Zn(2+) contacts are provided by histidine 466 and aspartate 539. Residues 641–681 (RPGGQEEDSGEVDCSKKSAENGMVAHEPETTADAESTEKVG) are disordered.

The protein in the central section; belongs to the AAA ATPase family. It in the C-terminal section; belongs to the peptidase M41 family. In terms of assembly, homohexamer. The cofactor is Zn(2+).

Its subcellular location is the cell inner membrane. Acts as a processive, ATP-dependent zinc metallopeptidase for both cytoplasmic and membrane proteins. Plays a role in the quality control of integral membrane proteins. This chain is ATP-dependent zinc metalloprotease FtsH, found in Chlorobium luteolum (strain DSM 273 / BCRC 81028 / 2530) (Pelodictyon luteolum).